Consider the following 387-residue polypeptide: WD repeat-containing protein 55 (387 aa).

Residues 1-10 (MATPTEHEDL) show a composition bias toward basic and acidic residues. The disordered stretch occupies residues 1–24 (MATPTEHEDLSEQEVTEDEFKTPK). WD repeat units follow at residues 33 to 72 (KLEA…GENK), 79 to 118 (HHLK…LETR), 122 to 160 (AHKV…SFMD), 163 to 202 (HHED…FELL), 205 to 244 (IQNG…ATSD), 247 to 286 (AVQA…VVGS), and 290 to 329 (HVGE…DEKV). Residues 356-387 (FFAGLLDTTEENGKEGENDEDDDDEDSDSGSD) are disordered. The span at 372-387 (ENDEDDDDEDSDSGSD) shows a compositional bias: acidic residues.

Belongs to the WD repeat WDR55 family.

It localises to the nucleus. The protein resides in the nucleolus. Functionally, nucleolar protein that acts as a modulator of rRNA synthesis. Plays a central role during organogenesis. This chain is WD repeat-containing protein 55 (wdr55), found in Danio rerio (Zebrafish).